The following is a 370-amino-acid chain: Galactose-1-phosphate uridylyltransferase (370 aa).

2 residues coordinate Zn(2+): C51 and C54. Residues A60 and 76–77 (NG) each bind UDP-alpha-D-glucose. A Zn(2+)-binding site is contributed by H121. Residue N166 participates in UDP-alpha-D-glucose binding. A Zn(2+)-binding site is contributed by H177. Residue H179 is the Tele-UMP-histidine intermediate of the active site. Q181 serves as a coordination point for UDP-alpha-D-glucose. Fe cation is bound by residues E195, H294, H311, and H313. Residues 326–329 (KFLV) and 331–332 (FE) contribute to the UDP-alpha-D-glucose site.

It belongs to the galactose-1-phosphate uridylyltransferase type 1 family. Homodimer. Zn(2+) serves as cofactor.

It carries out the reaction alpha-D-galactose 1-phosphate + UDP-alpha-D-glucose = alpha-D-glucose 1-phosphate + UDP-alpha-D-galactose. It functions in the pathway carbohydrate metabolism; galactose metabolism. In Kluyveromyces lactis (strain ATCC 8585 / CBS 2359 / DSM 70799 / NBRC 1267 / NRRL Y-1140 / WM37) (Yeast), this protein is Galactose-1-phosphate uridylyltransferase (GAL7).